The following is a 220-amino-acid chain: Protein-L-isoaspartate O-methyltransferase (220 aa).

The active site involves Ser-68.

This sequence belongs to the methyltransferase superfamily. L-isoaspartyl/D-aspartyl protein methyltransferase family.

The protein resides in the cytoplasm. It carries out the reaction [protein]-L-isoaspartate + S-adenosyl-L-methionine = [protein]-L-isoaspartate alpha-methyl ester + S-adenosyl-L-homocysteine. Catalyzes the methyl esterification of L-isoaspartyl residues in peptides and proteins that result from spontaneous decomposition of normal L-aspartyl and L-asparaginyl residues. It plays a role in the repair and/or degradation of damaged proteins. The polypeptide is Protein-L-isoaspartate O-methyltransferase (Dictyoglomus thermophilum (strain ATCC 35947 / DSM 3960 / H-6-12)).